The following is a 69-amino-acid chain: uncharacterized protein (69 aa).

The signal sequence occupies residues 1–16 (MSLGLIFALLLTHAAA).

This is an uncharacterized protein from Archaeoglobus fulgidus (strain ATCC 49558 / DSM 4304 / JCM 9628 / NBRC 100126 / VC-16).